Here is a 416-residue protein sequence, read N- to C-terminus: GTPase Obg (416 aa).

An Obg domain is found at Met1–Ile157. Disordered stretches follow at residues Glu25–Val44 and Thr62–Glu82. Residues Gly32–Gly42 show a composition bias toward gly residues. Residues Tyr63–Arg72 show a composition bias toward basic and acidic residues. In terms of domain architecture, OBG-type G spans Ala158–Arg324. Residues Gly164 to Ser171, Phe189 to Ser193, Asp211 to Gly214, Asn277 to Asp280, and Ser305 to Leu307 contribute to the GTP site. Ser171 and Thr191 together coordinate Mg(2+). The OCT domain maps to Pro336 to Pro414.

It belongs to the TRAFAC class OBG-HflX-like GTPase superfamily. OBG GTPase family. Monomer. Requires Mg(2+) as cofactor.

It is found in the cytoplasm. In terms of biological role, an essential GTPase which binds GTP, GDP and possibly (p)ppGpp with moderate affinity, with high nucleotide exchange rates and a fairly low GTP hydrolysis rate. Plays a role in control of the cell cycle, stress response, ribosome biogenesis and in those bacteria that undergo differentiation, in morphogenesis control. This Thermus thermophilus (strain ATCC BAA-163 / DSM 7039 / HB27) protein is GTPase Obg.